Consider the following 610-residue polypeptide: UvrABC system protein C (610 aa).

One can recognise a GIY-YIG domain in the interval 16–94; the sequence is SQPGVYRMYD…IKLYQPRYNV (79 aa). The 36-residue stretch at 204 to 239 folds into the UVR domain; that stretch reads DQVLTQLIARMEKASQDLAFEEAARIRDQIQAVRRV.

The protein belongs to the UvrC family. In terms of assembly, interacts with UvrB in an incision complex.

It localises to the cytoplasm. In terms of biological role, the UvrABC repair system catalyzes the recognition and processing of DNA lesions. UvrC both incises the 5' and 3' sides of the lesion. The N-terminal half is responsible for the 3' incision and the C-terminal half is responsible for the 5' incision. The chain is UvrABC system protein C from Salmonella paratyphi B (strain ATCC BAA-1250 / SPB7).